Here is a 586-residue protein sequence, read N- to C-terminus: CTP synthase (586 aa).

The segment at 1–278 (MRKHPQTATK…DAFVVRRLNL (278 aa)) is amidoligase domain. Ser-20 is a CTP binding site. Ser-20 is a binding site for UTP. ATP contacts are provided by residues 21-26 (SLGKGL) and Asp-78. Mg(2+)-binding residues include Asp-78 and Glu-152. CTP contacts are provided by residues 159–161 (DIE), 199–204 (KTKPTQ), and Lys-235. Residues 199–204 (KTKPTQ) and Lys-235 each bind UTP. Residues 303–551 (RIALVGKYVE…VGAAIDYKAG (249 aa)) form the Glutamine amidotransferase type-1 domain. Gly-366 is a binding site for L-glutamine. Cys-393 serves as the catalytic Nucleophile; for glutamine hydrolysis. L-glutamine-binding positions include 394 to 397 (LGLQ), Glu-416, and Arg-477. Residues His-524 and Glu-526 contribute to the active site. The interval 560 to 586 (EIPEHTPNGSSHRDGVGQPLPEPASRG) is disordered.

Belongs to the CTP synthase family. As to quaternary structure, homotetramer.

The catalysed reaction is UTP + L-glutamine + ATP + H2O = CTP + L-glutamate + ADP + phosphate + 2 H(+). The enzyme catalyses L-glutamine + H2O = L-glutamate + NH4(+). It catalyses the reaction UTP + NH4(+) + ATP = CTP + ADP + phosphate + 2 H(+). It functions in the pathway pyrimidine metabolism; CTP biosynthesis via de novo pathway; CTP from UDP: step 2/2. With respect to regulation, allosterically activated by GTP, when glutamine is the substrate; GTP has no effect on the reaction when ammonia is the substrate. The allosteric effector GTP functions by stabilizing the protein conformation that binds the tetrahedral intermediate(s) formed during glutamine hydrolysis. Inhibited by the product CTP, via allosteric rather than competitive inhibition. In terms of biological role, catalyzes the ATP-dependent amination of UTP to CTP with either L-glutamine or ammonia as the source of nitrogen. Regulates intracellular CTP levels through interactions with the four ribonucleotide triphosphates. The polypeptide is CTP synthase (Mycobacterium tuberculosis (strain CDC 1551 / Oshkosh)).